Here is a 326-residue protein sequence, read N- to C-terminus: Putative ribose-phosphate pyrophosphokinase 2 (326 aa).

Residues 43–45 and 102–103 each bind ATP; these read DGE and RQ. His-136 contributes to the Mg(2+) binding site. D-ribose 5-phosphate is bound by residues Asp-225 and 229–233; that span reads NTGKT.

Belongs to the ribose-phosphate pyrophosphokinase family. Class I subfamily. In terms of assembly, homohexamer. Mg(2+) serves as cofactor.

The protein localises to the cytoplasm. The catalysed reaction is D-ribose 5-phosphate + ATP = 5-phospho-alpha-D-ribose 1-diphosphate + AMP + H(+). It functions in the pathway metabolic intermediate biosynthesis; 5-phospho-alpha-D-ribose 1-diphosphate biosynthesis; 5-phospho-alpha-D-ribose 1-diphosphate from D-ribose 5-phosphate (route I): step 1/1. Functionally, involved in the biosynthesis of the central metabolite phospho-alpha-D-ribosyl-1-pyrophosphate (PRPP) via the transfer of pyrophosphoryl group from ATP to 1-hydroxyl of ribose-5-phosphate (Rib-5-P). In Streptococcus pyogenes serotype M18 (strain MGAS8232), this protein is Putative ribose-phosphate pyrophosphokinase 2.